The sequence spans 661 residues: WD repeat-containing protein 26 (661 aa).

Residues 1–27 are compositionally biased toward gly residues; sequence MQANGAGGGGGGGGGGGGGGGGGGGQG. 2 disordered regions span residues 1 to 70 and 99 to 118; these read MQAN…ASNN and TAAS…KKKK. 2 stretches are compositionally biased toward low complexity: residues 56–70 and 99–113; these read ANGL…ASNN and TAAS…LGSS. 2 positions are modified to phosphoserine: Ser-121 and Ser-123. The region spanning 123-155 is the LisH domain; sequence SDEDVIRLIGQHLNGLGLNQTVDLLMQESGCRL. In terms of domain architecture, CTLH spans 156–231; sequence EHPSATKFRN…EYLEDGKVLE (76 aa). 6 WD repeats span residues 353 to 392, 399 to 438, 444 to 484, 524 to 563, 566 to 608, and 611 to 651; these read EHCN…HLLK, GHAY…GELR, SHED…DSWE, QEDH…LVRK, GVTQ…PIAE, and GHTR…DHQN.

In terms of assembly, forms homooligomers. Identified in the CTLH complex that contains GID4, RANBP9 and/or RANBP10, MKLN1, MAEA, RMND5A (or alternatively its paralog RMND5B), GID8, ARMC8, WDR26 and YPEL5. Within this complex, MAEA, RMND5A (or alternatively its paralog RMND5B), GID8, WDR26, and RANBP9 and/or RANBP10 form the catalytic core, while GID4, MKLN1, ARMC8 and YPEL5 have ancillary roles. Interacts with DDB1-CUL4A/B E3 ligase complexes. Forms a complex composed of at least WDR26, a G-beta:gamma unit, and PLCB2. Interacts with AXIN1. Broadly expressed, with highest levels in heart and skeletal muscle.

It is found in the cytoplasm. Its subcellular location is the nucleus. The protein localises to the mitochondrion. Its function is as follows. G-beta-like protein involved in cell signal transduction. Acts as a negative regulator in MAPK signaling pathway. Functions as a scaffolding protein to promote G beta:gamma-mediated PLCB2 plasma membrane translocation and subsequent activation in leukocytes. Core component of the CTLH E3 ubiquitin-protein ligase complex that selectively accepts ubiquitin from UBE2H and mediates ubiquitination and subsequent proteasomal degradation of the transcription factor HBP1. Acts as a negative regulator of the canonical Wnt signaling pathway through preventing ubiquitination of beta-catenin CTNNB1 by the beta-catenin destruction complex, thus negatively regulating CTNNB1 degradation. Serves as a scaffold to coordinate PI3K/AKT pathway-driven cell growth and migration. Protects cells from oxidative stress-induced apoptosis via the down-regulation of AP-1 transcriptional activity as well as by inhibiting cytochrome c release from mitochondria. Also protects cells by promoting hypoxia-mediated autophagy and mitophagy. The protein is WD repeat-containing protein 26 (WDR26) of Homo sapiens (Human).